Consider the following 295-residue polypeptide: Peptide transport system permease protein SapC (295 aa).

6 consecutive transmembrane segments (helical) span residues 27 to 47, 102 to 122, 129 to 149, 157 to 177, 219 to 239, and 262 to 282; these read IALFSFYLLIALIFTALFASY, LLVVFSVAIIGGALGIIAGLL, FVGHIFDAFLSLPILLIAVVI, LWNAMFATLLAILPYFIHTIY, VARAFVIAVLDISALSFISLG, and PWTVLLPGFAIIFTILLSIIF. One can recognise an ABC transmembrane type-1 domain in the interval 98–278; that stretch reads LGSALLVVFS…GFAIIFTILL (181 aa).

This sequence belongs to the binding-protein-dependent transport system permease family. OppBC subfamily.

It is found in the cell inner membrane. Involved in a peptide intake transport system that plays a role in the resistance to antimicrobial peptides. This chain is Peptide transport system permease protein SapC (sapC), found in Haemophilus influenzae (strain ATCC 51907 / DSM 11121 / KW20 / Rd).